Consider the following 308-residue polypeptide: GMP synthase [glutamine-hydrolyzing] subunit B (308 aa).

Positions Met1–Arg185 constitute a GMPS ATP-PPase domain. Ser28–Ser34 contacts ATP.

In terms of assembly, heterodimer composed of a glutamine amidotransferase subunit (A) and a GMP-binding subunit (B).

The enzyme catalyses XMP + L-glutamine + ATP + H2O = GMP + L-glutamate + AMP + diphosphate + 2 H(+). It participates in purine metabolism; GMP biosynthesis; GMP from XMP (L-Gln route): step 1/1. Functionally, catalyzes the synthesis of GMP from XMP. The protein is GMP synthase [glutamine-hydrolyzing] subunit B (guaAB) of Pyrococcus horikoshii (strain ATCC 700860 / DSM 12428 / JCM 9974 / NBRC 100139 / OT-3).